The primary structure comprises 887 residues: Alanine--tRNA ligase (887 aa).

The Zn(2+) site is built by H581, H585, C683, and H687.

The protein belongs to the class-II aminoacyl-tRNA synthetase family. Zn(2+) is required as a cofactor.

It localises to the cytoplasm. It carries out the reaction tRNA(Ala) + L-alanine + ATP = L-alanyl-tRNA(Ala) + AMP + diphosphate. Its function is as follows. Catalyzes the attachment of alanine to tRNA(Ala) in a two-step reaction: alanine is first activated by ATP to form Ala-AMP and then transferred to the acceptor end of tRNA(Ala). Also edits incorrectly charged Ser-tRNA(Ala) and Gly-tRNA(Ala) via its editing domain. The protein is Alanine--tRNA ligase of Ehrlichia chaffeensis (strain ATCC CRL-10679 / Arkansas).